A 231-amino-acid polypeptide reads, in one-letter code: Lecithin retinol acyltransferase (231 aa).

Over 1-194 (MKNPMLEAAS…VKIIIRDQRS (194 aa)) the chain is Cytoplasmic. Residues 50-177 (VLEVSRTHFI…CRYGSRISPQ (128 aa)) enclose the LRAT domain. Catalysis depends on residues H60 and H72. C161 acts as the Acyl-thioester intermediate in catalysis. A helical transmembrane segment spans residues 195 to 215 (SLASAVLGLASIVYTGLASYM). Residues 216-231 (TLPAICIPFCLWMMSG) are Lumenal-facing.

The protein belongs to the H-rev107 family. As to expression, hepatic stellate cells and endothelial cells (at protein level).

The protein localises to the endoplasmic reticulum membrane. Its subcellular location is the rough endoplasmic reticulum. It is found in the endosome. It localises to the multivesicular body. The protein resides in the cytoplasm. The protein localises to the perinuclear region. The enzyme catalyses all-trans-retinol--[retinol-binding protein] + a 1,2-diacyl-sn-glycero-3-phosphocholine = apo--[retinol-binding protein] + an all-trans-retinyl ester + a 2-acyl-sn-glycero-3-phosphocholine. It carries out the reaction 1,2-diheptanoyl-sn-glycero-3-phosphocholine + all-trans-retinol--[retinol-binding protein] = all-trans-retinyl heptanoate + 2-heptanoyl-sn-glycero-3-phosphocholine + apo--[retinol-binding protein]. The catalysed reaction is 1,2-dioctanoyl-sn-glycero-3-phosphocholine + all-trans-retinol--[retinol-binding protein] = 2-octanoyl-sn-glycero-3-phosphocholine + all-trans-retinyl octanoate + apo--[retinol-binding protein]. It catalyses the reaction all-trans-retinol--[retinol-binding protein] + 1,2-dihexadecanoyl-sn-glycero-3-phosphocholine = apo--[retinol-binding protein] + all-trans-retinyl hexadecanoate + 2-hexadecanoyl-sn-glycero-3-phosphocholine. The enzyme catalyses 1,2-didodecanoyl-sn-glycero-3-phosphocholine + all-trans-retinol--[retinol-binding protein] = 2-dodecanoyl-sn-glycero-3-phosphocholine + all-trans-retinyl dodecanoate + apo--[retinol-binding protein]. It carries out the reaction 1,2-dihexadecanoyl-sn-glycero-3-phosphocholine + all-trans-retinol = all-trans-retinyl hexadecanoate + 2-hexadecanoyl-sn-glycero-3-phosphocholine. It functions in the pathway cofactor metabolism; retinol metabolism. Inhibited by all-trans-retinyl alpha-bromoacetate and N-boc-L-biocytinyl-11-aminoundecane chloro-methyl ketone (BACMK). Functionally, transfers the acyl group from the sn-1 position of phosphatidylcholine to all-trans retinol, producing all-trans retinyl esters. Retinyl esters are storage forms of vitamin A. LRAT plays a critical role in vision. It provides the all-trans retinyl ester substrates for the isomerohydrolase which processes the esters into 11-cis-retinol in the retinal pigment epithelium; due to a membrane-associated alcohol dehydrogenase, 11 cis-retinol is oxidized and converted into 11-cis-retinaldehyde which is the chromophore for rhodopsin and the cone photopigments. Required for the survival of cone photoreceptors and correct rod photoreceptor cell morphology. The sequence is that of Lecithin retinol acyltransferase (Lrat) from Mus musculus (Mouse).